We begin with the raw amino-acid sequence, 206 residues long: Venom allergen 5 2 (206 aa).

Cystine bridges form between Cys4/Cys16, Cys8/Cys104, Cys28/Cys96, and Cys172/Cys189. The 144-residue stretch at 48–191 folds into the SCP domain; sequence DEHNRFRQKV…MKSHYLVCNY (144 aa).

The protein belongs to the CRISP family. Venom allergen 5-like subfamily. Expressed by the venom gland.

The protein resides in the secreted. The protein is Venom allergen 5 2 of Polybia paulista (Neotropical social wasp).